The chain runs to 420 residues: Hemocyanin 2-c chain (420 aa).

Basic residues predominate over residues 1–12; that stretch reads DFGHSKKIRKNV. Residues 1–20 are disordered; the sequence is DFGHSKKIRKNVHSLTAEEQ. His46 lines the Cu cation pocket. Cys52 and Cys63 are disulfide-bonded. 5 residues coordinate Cu cation: His66, His73, His185, His189, and His216. 2 disulfide bridges follow: Cys175/Cys242 and Cys335/Cys342.

Post-translationally, O-glycosylated. Hemolymph.

The protein localises to the secreted. Its subcellular location is the extracellular space. Hemocyanins are copper-containing oxygen carriers occurring freely dissolved in the hemolymph of many mollusks and arthropods. This Megathura crenulata (Giant keyhole limpet) protein is Hemocyanin 2-c chain.